Consider the following 266-residue polypeptide: Diphthine synthase (266 aa).

S-adenosyl-L-methionine contacts are provided by residues Leu9, Asp84, Val87, 112-113 (SI), Leu169, Ala210, and His235.

Belongs to the diphthine synthase family. In terms of assembly, homodimer.

The catalysed reaction is 2-[(3S)-amino-3-carboxypropyl]-L-histidyl-[translation elongation factor 2] + 3 S-adenosyl-L-methionine = diphthine-[translation elongation factor 2] + 3 S-adenosyl-L-homocysteine + 3 H(+). Its pathway is protein modification; peptidyl-diphthamide biosynthesis. Its function is as follows. S-adenosyl-L-methionine-dependent methyltransferase that catalyzes the trimethylation of the amino group of the modified target histidine residue in translation elongation factor 2 (EF-2), to form an intermediate called diphthine. The three successive methylation reactions represent the second step of diphthamide biosynthesis. In Methanosarcina mazei (strain ATCC BAA-159 / DSM 3647 / Goe1 / Go1 / JCM 11833 / OCM 88) (Methanosarcina frisia), this protein is Diphthine synthase.